A 264-amino-acid polypeptide reads, in one-letter code: Probable glycerophosphodiester phosphodiesterase 2 (264 aa).

Residues 17-255 enclose the GP-PDE domain; the sequence is RIAMAHRGFT…DRADLLRDVL (239 aa). The active-site Proton acceptor is His22. A divalent metal cation is bound by residues Glu50, Asp52, and His65. His65 (proton donor) is an active-site residue.

The protein belongs to the glycerophosphoryl diester phosphodiesterase family. It depends on a divalent metal cation as a cofactor.

It carries out the reaction a sn-glycero-3-phosphodiester + H2O = an alcohol + sn-glycerol 3-phosphate + H(+). Glycerophosphodiester phosphodiesterase hydrolyzes glycerophosphodiesters into glycerol-3-phosphate (G3P) and the corresponding alcohol. This chain is Probable glycerophosphodiester phosphodiesterase 2, found in Mycobacterium tuberculosis (strain ATCC 25618 / H37Rv).